The chain runs to 60 residues: Large ribosomal subunit protein uL30 (60 aa).

Belongs to the universal ribosomal protein uL30 family. In terms of assembly, part of the 50S ribosomal subunit.

This Cupriavidus metallidurans (strain ATCC 43123 / DSM 2839 / NBRC 102507 / CH34) (Ralstonia metallidurans) protein is Large ribosomal subunit protein uL30.